A 478-amino-acid chain; its full sequence is Alpha-(1,3)-fucosyltransferase FucT (478 aa).

Substrate contacts are provided by residues G94, V186–N189, R195, V222–K225, N240, and Y246–K250. The important for acceptor specificity stretch occupies residues D347–C353. 10 tandem repeats follow at residues D364–Y370, D371–Y377, D378–Y384, D385–Y391, D392–Y398, D399–Y405, D406–Y412, D413–Y419, D420–Y426, and D427–Y433. Residues D364–Y433 are 10 X 7 AA tandem repeat of D-D-L-R-[IV]-N-Y. Residues E434–L478 are may be involved in membrane binding.

The protein belongs to the glycosyltransferase 10 family. As to quaternary structure, homodimer.

The protein resides in the membrane. It localises to the cytoplasm. The enzyme catalyses a beta-D-galactosyl-(1-&gt;4)-N-acetyl-beta-D-glucosaminyl derivative + GDP-beta-L-fucose = a beta-D-galactosyl-(1-&gt;4)-[alpha-L-fucosyl-(1-&gt;3)]-N-acetyl-beta-D-glucosaminyl derivative + GDP + H(+). It functions in the pathway lipopolysaccharide biosynthesis; LPS oligosaccharide biosynthesis. Functionally, involved in the biosynthesis of the Lewis X (LeX) trisaccharide of the lipopolysaccharide (LPS) O-antigen. Catalyzes the addition of fucose in alpha 1-3 linkage to Gal-beta-1-4-GlcNAc-beta-O-R (LacNAc-R) type II acceptor. This chain is Alpha-(1,3)-fucosyltransferase FucT, found in Helicobacter pylori (Campylobacter pylori).